Consider the following 75-residue polypeptide: MSSGGLLLLLGLLTLWAELTPVSGQDRPVKPGLCPPRPQKPPCVKECKNDWSCRGEQKCCRYGCIYECRDPIFVK.

An N-terminal signal peptide occupies residues 1-24 (MSSGGLLLLLGLLTLWAELTPVSG). Residues 27–72 (RPVKPGLCPPRPQKPPCVKECKNDWSCRGEQKCCRYGCIYECRDPI) enclose the WAP domain. 4 cysteine pairs are disulfide-bonded: cysteine 34-cysteine 60, cysteine 43-cysteine 64, cysteine 47-cysteine 59, and cysteine 53-cysteine 68.

It belongs to the venom waprin family. Expressed by the venom gland.

The protein localises to the secreted. Its function is as follows. Damages membranes of susceptible bacteria. Has no hemolytic activity. Not toxic to mice. Does not inhibit the proteinases elastase and cathepsin G. This is Nigwaprin-a from Cryptophis nigrescens (Eastern small-eyed snake).